We begin with the raw amino-acid sequence, 129 residues long: Small ribosomal subunit protein uS11 (129 aa).

Belongs to the universal ribosomal protein uS11 family. As to quaternary structure, part of the 30S ribosomal subunit. Interacts with proteins S7 and S18. Binds to IF-3.

Located on the platform of the 30S subunit, it bridges several disparate RNA helices of the 16S rRNA. Forms part of the Shine-Dalgarno cleft in the 70S ribosome. The polypeptide is Small ribosomal subunit protein uS11 (Histophilus somni (strain 129Pt) (Haemophilus somnus)).